The chain runs to 176 residues: Large ribosomal subunit protein uL6 (176 aa).

It belongs to the universal ribosomal protein uL6 family. Part of the 50S ribosomal subunit.

In terms of biological role, this protein binds to the 23S rRNA, and is important in its secondary structure. It is located near the subunit interface in the base of the L7/L12 stalk, and near the tRNA binding site of the peptidyltransferase center. The sequence is that of Large ribosomal subunit protein uL6 from Methanospirillum hungatei JF-1 (strain ATCC 27890 / DSM 864 / NBRC 100397 / JF-1).